The chain runs to 194 residues: Inosine triphosphate pyrophosphatase (194 aa).

10–15 (TSSKKK) contacts ITP. Glutamate 37 serves as a coordination point for Mg(2+). ITP-binding positions include lysine 49, 65–66 (DV), lysine 82, 142–145 (FGWD), lysine 166, and 171–172 (HR).

Belongs to the HAM1 NTPase family. Homodimer. Mg(2+) is required as a cofactor. Requires Mn(2+) as cofactor.

The protein resides in the cytoplasm. The catalysed reaction is ITP + H2O = IMP + diphosphate + H(+). The enzyme catalyses dITP + H2O = dIMP + diphosphate + H(+). It catalyses the reaction XTP + H2O = XMP + diphosphate + H(+). Functionally, pyrophosphatase that hydrolyzes non-canonical purine nucleotides such as inosine triphosphate (ITP), deoxyinosine triphosphate (dITP) or xanthosine 5'-triphosphate (XTP) to their respective monophosphate derivatives. The enzyme does not distinguish between the deoxy- and ribose forms. Probably excludes non-canonical purines from RNA and DNA precursor pools, thus preventing their incorporation into RNA and DNA and avoiding chromosomal lesions. The protein is Inosine triphosphate pyrophosphatase of Giardia intestinalis (strain ATCC 50803 / WB clone C6) (Giardia lamblia).